The sequence spans 1083 residues: Solute carrier family 12 member 7 (1083 aa).

The segment at 1–51 (MPTNFTVVPVEARADGAGDEAAERTEEPGSPESADPACPTPGDGNPRENSP) is disordered. Residues 1–119 (MPTNFTVVPV…RREIKAPRMG (119 aa)) lie on the Cytoplasmic side of the membrane. The segment covering 12–27 (ARADGAGDEAAERTEE) has biased composition (basic and acidic residues). Phosphoserine occurs at positions 30, 33, 50, and 62. A discontinuously helical transmembrane segment spans residues 120–142 (TFIGVYLPCLQNILGVILFLRLT). 2 residues coordinate K(+): asparagine 131 and isoleucine 132. Valine 135 lines the chloride pocket. The Extracellular portion of the chain corresponds to 143-149 (WIVGAAG). A helical membrane pass occupies residues 150-172 (VLESFLIVAMCCTCTMLTAISMS). Residues 173–196 (AIATNGVVPAGGSYYMISRSLGPE) lie on the Cytoplasmic side of the membrane. The chain crosses the membrane as a helical span at residues 197-225 (FGGAVGLCFYLGTTFAGAMYILGTIEIFL). Topologically, residues 226 to 249 (TYISPSAAIFQAETADGEAAALLN) are extracellular. 2 helical membrane-spanning segments follow: residues 250-271 (NMRV…VGVK) and 272-300 (YVNK…KTAF). Topologically, residues 301-419 (APPDIPVCLL…PYVLTDIMTY (119 aa)) are extracellular. 3 N-linked (GlcNAc...) asparagine glycosylation sites follow: asparagine 312, asparagine 331, and asparagine 360. The chain crosses the membrane as a helical span at residues 420–440 (FTMLVGIYFPSVTGIMAGSNR). Proline 429 and threonine 432 together coordinate K(+). Residue proline 429 participates in chloride binding. Chloride contacts are provided by glycine 433 and isoleucine 434. Over 441-450 (SGDLKDAQKS) the chain is Cytoplasmic. A helical transmembrane segment spans residues 451-473 (IPTGTILAIVTTSFIYLSCIVLF). Topologically, residues 474-504 (GACIEGVVLRDKFGEALQGNLVIGMLAWPSP) are extracellular. A helical transmembrane segment spans residues 505 to 531 (WVIVIGSFFSTCGAGLQSLTGAPRLLQ). The Cytoplasmic segment spans residues 532–554 (AIARDGIIPFLQVFGHGKANGEP). The next 2 helical transmembrane spans lie at 555 to 573 (TWAL…LIAS) and 574 to 598 (LDSV…ACAV). Tyrosine 589 is a chloride binding site. Over 599 to 612 (QTLLRTPNWRPRFK) the chain is Cytoplasmic. The next 2 membrane-spanning stretches (helical) occupy residues 613–635 (FYHW…ICSW) and 636–651 (YYAL…IYKY). Residues 652–1083 (IEYRGAEKEW…GGREVITIYS (432 aa)) are Cytoplasmic-facing. A scissor helix region spans residues 664-680 (GIRGLSLNAARYALLRV). Phosphothreonine is present on residues threonine 973 and threonine 980.

This sequence belongs to the SLC12A transporter family. K/Cl co-transporter subfamily. In terms of assembly, homodimer; adopts a domain-swap conformation at the scissor helices connecting the transmembrane domain and C-terminal domain. Heterodimer with K-Cl cotransporter SLC12A5. Widely expressed with highest levels in kidney, liver and pancreas. Expressed in choroid plexus and suprachiasmatic nucleus.

It is found in the cell membrane. The catalysed reaction is K(+)(in) + chloride(in) = K(+)(out) + chloride(out). With respect to regulation, activated by N-ethylmaleimide (NEM). Inhibited by furosemide, DIDS and bumetanide. The inhibition is much stronger in the presence of 50 mM K(+) in the uptake medium. Inhibited by DIOA. Inhibited by WNK3. Its function is as follows. Mediates electroneutral potassium-chloride cotransport when activated by cell swelling. May mediate K(+) uptake into Deiters' cells in the cochlea and contribute to K(+) recycling in the inner ear. Important for the survival of cochlear outer and inner hair cells and the maintenance of the organ of Corti. May be required for basolateral Cl(-) extrusion in the kidney and contribute to renal acidification. The sequence is that of Solute carrier family 12 member 7 from Rattus norvegicus (Rat).